The chain runs to 421 residues: Glutamyl-tRNA reductase (421 aa).

Substrate is bound by residues 49-52 (TCNR), serine 109, 114-116 (EAQ), and glutamine 120. The Nucleophile role is filled by cysteine 50. 189–194 (GAGEMC) contacts NADP(+).

The protein belongs to the glutamyl-tRNA reductase family. In terms of assembly, homodimer.

The catalysed reaction is (S)-4-amino-5-oxopentanoate + tRNA(Glu) + NADP(+) = L-glutamyl-tRNA(Glu) + NADPH + H(+). The protein operates within porphyrin-containing compound metabolism; protoporphyrin-IX biosynthesis; 5-aminolevulinate from L-glutamyl-tRNA(Glu): step 1/2. Catalyzes the NADPH-dependent reduction of glutamyl-tRNA(Glu) to glutamate 1-semialdehyde (GSA). The chain is Glutamyl-tRNA reductase from Magnetococcus marinus (strain ATCC BAA-1437 / JCM 17883 / MC-1).